Consider the following 137-residue polypeptide: CDGSH iron-sulfur domain-containing protein 3, mitochondrial (137 aa).

K65 is subject to N6-acetyllysine; alternate. K65 carries the post-translational modification N6-succinyllysine; alternate. Residues C70, C72, C81, and H85 each coordinate [2Fe-2S] cluster. K96 carries the post-translational modification N6-acetyllysine. [2Fe-2S] cluster contacts are provided by C108, C110, C119, and H123. An N6-acetyllysine; alternate modification is found at K124. K124 carries the N6-succinyllysine; alternate modification.

It belongs to the CISD protein family. Monomer. [2Fe-2S] cluster serves as cofactor.

The protein localises to the mitochondrion. Functionally, can transfer its iron-sulfur clusters to the apoferrodoxins FDX1 and FDX2. Contributes to mitochondrial iron homeostasis and in maintaining normal levels of free iron and reactive oxygen species, and thereby contributes to normal mitochondrial function. The chain is CDGSH iron-sulfur domain-containing protein 3, mitochondrial (Cisd3) from Mus musculus (Mouse).